We begin with the raw amino-acid sequence, 401 residues long: Multidrug resistance protein MdtH (401 aa).

11 consecutive transmembrane segments (helical) span residues 13 to 33 (YFLI…FPLI), 34 to 54 (SIHF…ALGL), 88 to 108 (IGFI…ACIL), 139 to 159 (ILML…SWLL), 164 to 184 (FQLV…FNAW), 211 to 231 (FIIY…VMLM), 248 to 268 (YIYI…TYWM), 275 to 295 (ETRL…IGSV), 298 to 318 (LYEL…AEPA), 341 to 361 (LSLA…YDLG), and 366 to 386 (FYQL…LILY).

The protein belongs to the major facilitator superfamily. DHA1 family. MdtH (TC 2.A.1.2.21) subfamily.

The protein resides in the cell inner membrane. The sequence is that of Multidrug resistance protein MdtH from Blochmanniella floridana.